The primary structure comprises 91 residues: Kazal-type trypsin inhibitor (91 aa).

The first 22 residues, 1-22 (MRHIGVFVGVLALALVLLVVEA), serve as a signal peptide directing secretion. The region spanning 25-78 (DAERGVCACPRIYMPVCGSNLKTYNNDCLLRCEINSDLGRANNLRKIADQACDN) is the Kazal-like domain. 3 disulfide bridges follow: C31–C56, C33–C52, and C41–C76. N78 carries an N-linked (GlcNAc...) asparagine glycan.

Interacts with human PLG (plasmin). As to expression, female salivary gland. Female gut at 3 and 24 hours after blood feeding. Female carcass. Male tissues. Not detected in ovary and fat body at 3 and 24 hours after blood feeding.

The protein localises to the secreted. Anticoagulant protein that decreases host thrombin (F2) activity via an uncompetitive inhibition mechanism. Inhibits amidolytic activity of host plasmin (PLG). Inhibits amidolytic activity of host trypsin. Inhibits trypsin-like endogenous activity from gut of female mosquitoes 24 hours after feeding and weakly affects enzyme activity from gut 3 hours after feeding, suggesting a possible role as an inhibitor of endogenous proteases. Its function is as follows. (Microbial infection) Limits host plasmin-mediated enhancement of dengue virus type 2 infection in mosquito midgut. This is Kazal-type trypsin inhibitor from Aedes aegypti (Yellowfever mosquito).